The chain runs to 314 residues: MIOREX complex component 8 (314 aa).

Residues 132-312 form the EngB-type G domain; that stretch reads TLPEVIFLGG…RYVIFQSCGL (181 aa). Residues 140 to 147, 173 to 177, 191 to 194, 253 to 256, and 290 to 292 contribute to the GTP site; these read GGTNVGKS, GFTKT, DSPG, TKMD, and SST. Mg(2+)-binding residues include Ser147 and Thr175.

It belongs to the TRAFAC class TrmE-Era-EngA-EngB-Septin-like GTPase superfamily. EngB GTPase family. In terms of assembly, associates with the mitochondrial ribosome. The cofactor is Mg(2+). Sumoylated upon ethanol stress.

Its subcellular location is the mitochondrion. Component of MIOREX complexes, large expressome-like assemblies of ribosomes with factors involved in all the steps of post-transcriptional gene expression. This chain is MIOREX complex component 8, found in Saccharomyces cerevisiae (strain ATCC 204508 / S288c) (Baker's yeast).